Here is a 123-residue protein sequence, read N- to C-terminus: uncharacterized protein (123 aa).

Disordered regions lie at residues 1 to 33 and 82 to 123; these read MAPP…RRRK and EKAA…EDKS. The segment covering 18-33 has biased composition (basic residues); sequence KLFKRRRVLSRDRRRK.

This is an uncharacterized protein from Mus musculus (Mouse).